The primary structure comprises 97 residues: Putative pterin-4-alpha-carbinolamine dehydratase (97 aa).

This sequence belongs to the pterin-4-alpha-carbinolamine dehydratase family.

It catalyses the reaction (4aS,6R)-4a-hydroxy-L-erythro-5,6,7,8-tetrahydrobiopterin = (6R)-L-erythro-6,7-dihydrobiopterin + H2O. The chain is Putative pterin-4-alpha-carbinolamine dehydratase from Saccharolobus solfataricus (strain ATCC 35092 / DSM 1617 / JCM 11322 / P2) (Sulfolobus solfataricus).